The following is a 330-amino-acid chain: Ubiquinone biosynthesis protein COQ4, mitochondrial (330 aa).

A mitochondrion-targeting transit peptide spans 1–31; it reads MLQSTKVTKSVLTNVLRVEQRRGFLLSGAAV. Residues His212, Asp213, His216, and Glu228 each contribute to the Zn(2+) site.

It belongs to the COQ4 family. In terms of assembly, component of a multi-subunit COQ enzyme complex, composed of at least COQ3, COQ4, COQ5, COQ6, COQ7 and COQ9. The cofactor is Zn(2+).

It localises to the mitochondrion inner membrane. The enzyme catalyses a 4-hydroxy-3-methoxy-5-(all-trans-polyprenyl)benzoate + H(+) = a 2-methoxy-6-(all-trans-polyprenyl)phenol + CO2. It participates in cofactor biosynthesis; ubiquinone biosynthesis. Its function is as follows. Lyase that catalyzes the C1-decarboxylation of 4-hydroxy-3-methoxy-5-(all-trans-polyprenyl)benzoic acid into 2-methoxy-6-(all-trans-polyprenyl)phenol during ubiquinone biosynthesis. This Candida glabrata (strain ATCC 2001 / BCRC 20586 / JCM 3761 / NBRC 0622 / NRRL Y-65 / CBS 138) (Yeast) protein is Ubiquinone biosynthesis protein COQ4, mitochondrial.